The chain runs to 212 residues: MSIQEIRHPLIRHKLGLMRRADISTKNFRELAQEVGALLTYEATKDLPLETYDIEGWCGTVSVEKIAGKKITVVPILRAGIGMLEGVLSLIPGAKVSAVGVARNEETLQAHTYLEKLVPEIDERLAMIIDPMLATGSSMVATIDLLKKAGCKDIRAMVLVAAPEGIAAVEQAHPDVIIYTASIDQKLNEHGYIIPGLGDAGDKIFGTKQKDA.

5-phospho-alpha-D-ribose 1-diphosphate is bound by residues R78, R103, and 130–138 (DPMLATGSS). Uracil is bound by residues I193 and 198–200 (GDA). D199 provides a ligand contact to 5-phospho-alpha-D-ribose 1-diphosphate.

Belongs to the UPRTase family. It depends on Mg(2+) as a cofactor.

It carries out the reaction UMP + diphosphate = 5-phospho-alpha-D-ribose 1-diphosphate + uracil. It functions in the pathway pyrimidine metabolism; UMP biosynthesis via salvage pathway; UMP from uracil: step 1/1. With respect to regulation, allosterically activated by GTP. In terms of biological role, catalyzes the conversion of uracil and 5-phospho-alpha-D-ribose 1-diphosphate (PRPP) to UMP and diphosphate. The polypeptide is Uracil phosphoribosyltransferase (Pseudomonas fluorescens (strain Pf0-1)).